A 400-amino-acid polypeptide reads, in one-letter code: Eukaryotic translation initiation factor 3 subunit M (400 aa).

One can recognise a PCI domain in the interval 180-354 (LIAKIYSALV…QSFAVHRAQK (175 aa)).

The protein belongs to the eIF-3 subunit M family. Component of the eukaryotic translation initiation factor 3 (eIF-3) complex.

It is found in the cytoplasm. In terms of biological role, component of the eukaryotic translation initiation factor 3 (eIF-3) complex, which is involved in protein synthesis of a specialized repertoire of mRNAs and, together with other initiation factors, stimulates binding of mRNA and methionyl-tRNAi to the 40S ribosome. The eIF-3 complex specifically targets and initiates translation of a subset of mRNAs involved in cell proliferation. The sequence is that of Eukaryotic translation initiation factor 3 subunit M from Yarrowia lipolytica (strain CLIB 122 / E 150) (Yeast).